Reading from the N-terminus, the 148-residue chain is Large ribosomal subunit protein bL9 (148 aa).

It belongs to the bacterial ribosomal protein bL9 family.

Functionally, binds to the 23S rRNA. The sequence is that of Large ribosomal subunit protein bL9 from Bacillus cereus (strain B4264).